Here is a 130-residue protein sequence, read N- to C-terminus: Protachykinin-1 (130 aa).

An N-terminal signal peptide occupies residues 1-19 (MKILVAVAVFFLVSTQLFA). A propeptide spanning residues 20 to 56 (EEIDANDDLNYWSDWSDSDQIKEAMPEPFEHLLQRIA) is cleaved from the precursor. 2 positions are modified to methionine amide: M68 and M107.

It belongs to the tachykinin family. In terms of processing, the substance P form is cleaved at Pro-59 by the prolyl endopeptidase FAP (seprase) activity (in vitro). Substance P is also cleaved and degraded by Angiotensin-converting enzyme (ACE) and neprilysin (MME).

The protein localises to the secreted. Tachykinins are active peptides which excite neurons, evoke behavioral responses, are potent vasodilators and secretagogues, and contract (directly or indirectly) many smooth muscles. The polypeptide is Protachykinin-1 (Tac1) (Mus musculus (Mouse)).